Reading from the N-terminus, the 360-residue chain is DNA replication and repair protein RecF (360 aa).

Residue 30–37 (GHNGSGKT) coordinates ATP.

This sequence belongs to the RecF family.

It is found in the cytoplasm. In terms of biological role, the RecF protein is involved in DNA metabolism; it is required for DNA replication and normal SOS inducibility. RecF binds preferentially to single-stranded, linear DNA. It also seems to bind ATP. This Haemophilus ducreyi (strain 35000HP / ATCC 700724) protein is DNA replication and repair protein RecF.